The following is a 170-amino-acid chain: UPF0220 protein C8D2.02c (170 aa).

Transmembrane regions (helical) follow at residues 23–43 (LGVY…VDAA), 54–74 (LHIT…IVIV), 101–121 (ILFI…TVFI), and 136–156 (MGSA…ALWI).

It belongs to the UPF0220 family.

Its subcellular location is the membrane. The polypeptide is UPF0220 protein C8D2.02c (Schizosaccharomyces pombe (strain 972 / ATCC 24843) (Fission yeast)).